We begin with the raw amino-acid sequence, 215 residues long: Probable serine/threonine-protein kinase 2 (215 aa).

The Protein kinase domain maps to 1-205; the sequence is MKPEQLVYLN…WLLKEMEQLL (205 aa).

It belongs to the protein kinase superfamily. Ser/Thr protein kinase family. Interacts with the kinase domain of host EIF2AK2.

It is found in the host cytoplasm. It catalyses the reaction L-seryl-[protein] + ATP = O-phospho-L-seryl-[protein] + ADP + H(+). The catalysed reaction is L-threonyl-[protein] + ATP = O-phospho-L-threonyl-[protein] + ADP + H(+). Its function is as follows. Plays a role in the inhibition of host eIF2alpha/EIF2S1 phosphorylation, thereby increasing viral fitness. In the insect host, targets the endogenous insect heme-regulated inhibitor (HRI)-like eIF2alpha kinase. The polypeptide is Probable serine/threonine-protein kinase 2 (PK2) (Autographa californica nuclear polyhedrosis virus (AcMNPV)).